The chain runs to 430 residues: tRNA pseudouridine synthase Pus10 (430 aa).

The active-site Nucleophile is D253. Residues Y320 and Y392 each contribute to the substrate site.

It belongs to the pseudouridine synthase Pus10 family.

It catalyses the reaction uridine(54) in tRNA = pseudouridine(54) in tRNA. It carries out the reaction uridine(55) in tRNA = pseudouridine(55) in tRNA. In terms of biological role, responsible for synthesis of pseudouridine from uracil-54 and uracil-55 in the psi GC loop of transfer RNAs. This chain is tRNA pseudouridine synthase Pus10, found in Ignisphaera aggregans (strain DSM 17230 / JCM 13409 / AQ1.S1).